Here is a 450-residue protein sequence, read N- to C-terminus: UDP-N-acetylmuramoylalanine--D-glutamate ligase (450 aa).

119-125 (GSNGKTT) provides a ligand contact to ATP.

Belongs to the MurCDEF family.

The protein localises to the cytoplasm. The catalysed reaction is UDP-N-acetyl-alpha-D-muramoyl-L-alanine + D-glutamate + ATP = UDP-N-acetyl-alpha-D-muramoyl-L-alanyl-D-glutamate + ADP + phosphate + H(+). The protein operates within cell wall biogenesis; peptidoglycan biosynthesis. Its function is as follows. Cell wall formation. Catalyzes the addition of glutamate to the nucleotide precursor UDP-N-acetylmuramoyl-L-alanine (UMA). This Streptococcus pneumoniae (strain Taiwan19F-14) protein is UDP-N-acetylmuramoylalanine--D-glutamate ligase.